A 396-amino-acid polypeptide reads, in one-letter code: Aspartate aminotransferase (396 aa).

L-aspartate is bound by residues Gly34, Trp130, and Asn183. Position 246 is an N6-(pyridoxal phosphate)lysine (Lys246). Arg374 contributes to the L-aspartate binding site.

The protein belongs to the class-I pyridoxal-phosphate-dependent aminotransferase family. Homodimer. It depends on pyridoxal 5'-phosphate as a cofactor.

It localises to the cytoplasm. The enzyme catalyses L-aspartate + 2-oxoglutarate = oxaloacetate + L-glutamate. This chain is Aspartate aminotransferase (aspC), found in Salmonella typhi.